We begin with the raw amino-acid sequence, 424 residues long: UPF0229 protein Sde_0732 (424 aa).

The disordered stretch occupies residues 52–109 (IGIPSKDISEPVFHHDSGGVDTRVLPGNDQFHSGDRIQRPPSGQGGGGSGKGASDSGE). Positions 58 to 69 (DISEPVFHHDSG) are enriched in basic and acidic residues.

The protein belongs to the UPF0229 family.

The chain is UPF0229 protein Sde_0732 from Saccharophagus degradans (strain 2-40 / ATCC 43961 / DSM 17024).